The sequence spans 233 residues: Eukaryotic translation initiation factor 3 subunit G (233 aa).

An RRM domain is found at Pro-152–Lys-229.

The protein belongs to the eIF-3 subunit G family. Component of the eukaryotic translation initiation factor 3 (eIF-3) complex.

It localises to the cytoplasm. RNA-binding component of the eukaryotic translation initiation factor 3 (eIF-3) complex, which is involved in protein synthesis of a specialized repertoire of mRNAs and, together with other initiation factors, stimulates binding of mRNA and methionyl-tRNAi to the 40S ribosome. The eIF-3 complex specifically targets and initiates translation of a subset of mRNAs involved in cell proliferation. This subunit can bind 18S rRNA. The chain is Eukaryotic translation initiation factor 3 subunit G (eif3G) from Dictyostelium discoideum (Social amoeba).